A 1077-amino-acid polypeptide reads, in one-letter code: Histone deacetylase 4 (1077 aa).

Residues 66 to 169 (REQQLQQELL…GKESAVASTE (104 aa)) are a coiled coil. The interaction with MEF2A stretch occupies residues 117-312 (MLAMKHQQEL…NSSSGNVSTE (196 aa)). Residues 132–162 (KLERHRQEQELEKQHREQKLQQLKNKEKGKE) show a composition bias toward basic and acidic residues. Disordered regions lie at residues 132–167 (KLERHRQEQELEKQHREQKLQQLKNKEKGKESAVAS), 204–225 (KTQHSSLDQSSPPQSGVSASYN), and 239–327 (PLRK…AETS). Positions 205 to 224 (TQHSSLDQSSPPQSGVSASY) are enriched in polar residues. Phosphoserine is present on S209. Phosphoserine; by CaMK4 and SIK1 is present on S245. A compositionally biased stretch (basic and acidic residues) spans 258 to 273 (KVAERRSSPLLRRKDG). Residues 289 to 310 (SACSSAPGSGPSSPNSSSGNVS) show a composition bias toward low complexity. The PxLPxI/L motif; mediates interaction with ANKRA2 and 14-3-3 proteins signature appears at 348–353 (PSLPNI). The residue at position 349 (S349) is a Phosphoserine. A Phosphoserine; by CaMK4 and SIK1 modification is found at S466. Disordered stretches follow at residues 508–530 (SKPSEPPRQPESHPEETEEELRE), 542–582 (RLPG…RPAT), and 623–646 (RPLSRAQSSPASATFPMSVQEPPT). Basic and acidic residues predominate over residues 515 to 530 (RQPESHPEETEEELRE). A Glycyl lysine isopeptide (Lys-Gly) (interchain with G-Cter in SUMO) cross-link involves residue K557. Residues S563, S630, and S631 each carry the phosphoserine modification. The span at 627 to 639 (RAQSSPASATFPM) shows a compositional bias: polar residues. The histone deacetylase stretch occupies residues 653–1077 (GLVYDTLMLK…EEPMEEEPPL (425 aa)). C665, C667, H673, and C744 together coordinate Zn(2+). H796 is a catalytic residue. A Nuclear export signal motif is present at residues 1044 to 1077 (EEAETVTAMASLSVGVKPAEKRSEEEPMEEEPPL). Residues 1052–1077 (MASLSVGVKPAEKRSEEEPMEEEPPL) form a disordered region.

Belongs to the histone deacetylase family. HD type 2 subfamily. As to quaternary structure, homodimer. Homodimerization via its N-terminal domain. Interacts with HDAC7. Interacts with MEF2A, MEF2C, MEF2D, MORC2 and NR2C1. Interacts with a 14-3-3 chaperone proteins in a phosphorylation dependent manner. Interacts with 14-3-3 protein YWHAB. Interacts with KDM5B and AHRR. Interacts with BTBD14B. Interacts with MYOCD. Interacts (via PxLPxI/L motif) with ANKRA2 (via ankyrin repeats). Interacts with CUL7 (as part of the 3M complex); negatively regulated by ANKRA2. Interacts with EP300 in the presence of TFAP2C. Interacts with HSPA1A and HSPA1B leading to their deacetylation at 'Lys-77'. Interacts with ZBTB7B; the interaction allows the recruitment of HDAC4 on CD8 loci for deacetylation and possible inhibition of CD8 genes expression. Interacts with DHX36. Interacts with SIK3; this interaction leads to HDAC4 retention in the cytoplasm. Phosphorylated by CaMK4 at Ser-245, Ser-466 and Ser-630. Phosphorylation at other residues by CaMK2D is required for the interaction with 14-3-3. Phosphorylation at Ser-349, within the PxLPxI/L motif, impairs the binding of ANKRA2 but generates a high-affinity docking site for 14-3-3. Post-translationally, sumoylation on Lys-557 is promoted by the E3 SUMO-protein ligase RANBP2, and prevented by phosphorylation by CaMK4.

Its subcellular location is the nucleus. The protein localises to the cytoplasm. It catalyses the reaction N(6)-acetyl-L-lysyl-[histone] + H2O = L-lysyl-[histone] + acetate. Its function is as follows. Responsible for the deacetylation of lysine residues on the N-terminal part of the core histones (H2A, H2B, H3 and H4). Histone deacetylation gives a tag for epigenetic repression and plays an important role in transcriptional regulation, cell cycle progression and developmental events. Histone deacetylases act via the formation of large multiprotein complexes. Involved in muscle maturation via its interaction with the myocyte enhancer factors such as MEF2A, MEF2C and MEF2D. Deacetylates HSPA1A and HSPA1B at 'Lys-77' leading to their preferential binding to co-chaperone STUB1. The protein is Histone deacetylase 4 (Hdac4) of Rattus norvegicus (Rat).